The primary structure comprises 303 residues: ATP synthase gamma chain (303 aa).

Belongs to the ATPase gamma chain family. In terms of assembly, F-type ATPases have 2 components, CF(1) - the catalytic core - and CF(0) - the membrane proton channel. CF(1) has five subunits: alpha(3), beta(3), gamma(1), delta(1), epsilon(1). CF(0) has three main subunits: a, b and c.

It localises to the cell membrane. Its function is as follows. Produces ATP from ADP in the presence of a proton gradient across the membrane. The gamma chain is believed to be important in regulating ATPase activity and the flow of protons through the CF(0) complex. In Oenococcus oeni (strain ATCC BAA-331 / PSU-1), this protein is ATP synthase gamma chain.